Reading from the N-terminus, the 275-residue chain is Adaptin ear-binding coat-associated protein 1 (275 aa).

The disordered stretch occupies residues 168-275; that stretch reads AKKGGASKPR…APQPSNWVQF (108 aa). A compositionally biased stretch (pro residues) spans 187-201; the sequence is LPPPPGGKVTIPPPS. The residue at position 211 (Thr-211) is a Phosphothreonine. Over residues 233-248 the composition is skewed to low complexity; it reads SPAPVSTSAPAPVSTS. 2 short sequence motifs (WXXF motif) span residues 252–255 and 272–275; these read WGDF and WVQF. Residues 256 to 275 are compositionally biased toward polar residues; sequence STASSSVPNQAPQPSNWVQF.

The protein belongs to the NECAP family. As to quaternary structure, interacts with AP1G1 and AP2A1 components of the adapter protein complexes AP-1 and AP-2. Interacts with the GAE domain proteins GGA1, GGA2 and GGA3. As to expression, expressed primarily in brain (at protein level).

The protein localises to the cytoplasmic vesicle. Its subcellular location is the clathrin-coated vesicle membrane. The protein resides in the cell membrane. In terms of biological role, involved in endocytosis. The sequence is that of Adaptin ear-binding coat-associated protein 1 (Necap1) from Mus musculus (Mouse).